Here is a 328-residue protein sequence, read N- to C-terminus: Tryptophan--tRNA ligase (328 aa).

Residues 11–13 (QPT) and 19–20 (GN) contribute to the ATP site. Positions 12–20 (PTGNIHLGN) match the 'HIGH' region motif. Aspartate 135 is a binding site for L-tryptophan. Residues 147-149 (GED), isoleucine 186, and 195-199 (KMSKS) contribute to the ATP site. The short motif at 195-199 (KMSKS) is the 'KMSKS' region element.

This sequence belongs to the class-I aminoacyl-tRNA synthetase family. In terms of assembly, homodimer.

Its subcellular location is the cytoplasm. It carries out the reaction tRNA(Trp) + L-tryptophan + ATP = L-tryptophyl-tRNA(Trp) + AMP + diphosphate + H(+). Its function is as follows. Catalyzes the attachment of tryptophan to tRNA(Trp). The protein is Tryptophan--tRNA ligase of Wolinella succinogenes (strain ATCC 29543 / DSM 1740 / CCUG 13145 / JCM 31913 / LMG 7466 / NCTC 11488 / FDC 602W) (Vibrio succinogenes).